We begin with the raw amino-acid sequence, 417 residues long: UDP-N-acetylglucosamine 1-carboxyvinyltransferase (417 aa).

Position 22 to 23 (22 to 23 (KN)) interacts with phosphoenolpyruvate. Position 93 (arginine 93) interacts with UDP-N-acetyl-alpha-D-glucosamine. Cysteine 117 acts as the Proton donor in catalysis. Cysteine 117 is modified (2-(S-cysteinyl)pyruvic acid O-phosphothioketal). Residues aspartate 304 and isoleucine 326 each contribute to the UDP-N-acetyl-alpha-D-glucosamine site.

The protein belongs to the EPSP synthase family. MurA subfamily.

The protein localises to the cytoplasm. It carries out the reaction phosphoenolpyruvate + UDP-N-acetyl-alpha-D-glucosamine = UDP-N-acetyl-3-O-(1-carboxyvinyl)-alpha-D-glucosamine + phosphate. The protein operates within cell wall biogenesis; peptidoglycan biosynthesis. In terms of biological role, cell wall formation. Adds enolpyruvyl to UDP-N-acetylglucosamine. This Neisseria gonorrhoeae (strain ATCC 700825 / FA 1090) protein is UDP-N-acetylglucosamine 1-carboxyvinyltransferase.